A 497-amino-acid chain; its full sequence is MRRNILTALACSWLTAHAASVDLKSLLLESDIQWASDTVISFSDTPEFEDATVRWNSYNAPTYAGAISPADEEDVVKVVKLAKEHNVPFLATGGRHGCTDMVGLQEGLAIDLSQINSYEVDSDDATVTVGAGSTFGQFQNAIHDAGFMIQSGSVTCPGFIGITLGGGIGRYTGIFGLEIDALISARIVTADGEVLTISETENAELFWGVRGAGFNFGIVTSATYKLHKLADNNNGEILTADFIIPANKTLFYFDWLESLGETMPPNAAGVSRFQFDSIAKEGQIGANWVFIGPEDEGREFLSPILDLQPSVAMLSYVPWNKLIETAGGGQGAMLCEARAPRSLFTGQMRKYTALTLQETFDKITTLWETHPGLAYTSLNFEAFPNHAAVAVPDDATAYPWRDAIGWFQFEIISLEGVGSDSFNAGEHAGQVLRDSWVRTSGYDNHTIYVNYARGDETLEQKYGASKLPRLAALKKKYDPDNVFGWNNALPTEYPGSG.

Positions 1 to 18 (MRRNILTALACSWLTAHA) are cleaved as a signal peptide. The FAD-binding PCMH-type domain maps to 59-229 (NAPTYAGAIS…TSATYKLHKL (171 aa)).

The protein belongs to the oxygen-dependent FAD-linked oxidoreductase family. Requires FAD as cofactor.

It functions in the pathway secondary metabolite biosynthesis. Its function is as follows. FAD-linked oxidoreductase; part of the gene cluster that mediates the biosynthesis of flavoglaucin and congeners (including aspergin, dihydroauroglaucin and auroglaucin), prenylated salicylaldehyde derivatives carrying a saturated or an unsaturated C-7 side chain. The PKS fogA releases the carboxylic acid (8E,10E,12E)-3,5,7-trihydroxytetradeca-8,10,12-trienoic acid as its product, as well as derivatives with one and two double bonds. FogA is indeed able to reduce the initial triketide, thus being at least partially responsible for the differently saturated heptyl side chains of flavoglaucin congeners. The oxidoreductases fogB, fogC and fogD modify the nascent polyketide in fogA-bound form and, together, fogA, fogB, fogC and fogD are necessary for the formation of the aromatic core and the cyclized PKS products are released as salicyl alcohols. In particular, fogB is responsible for oxidation of a hydroxyl group or reduction of remaining double bond(s) at the C-7 residue whereas fogD is probably involved in the reductive release of the modified PKS products. The cytochrome P450 monooxygenase fogE is then responsible for the hydroxylation at C-3 of the benzene ring. The fogE products are substrates of the prenyltransferase fogH and the prenylated benzyl alcohols are subsequently oxidized by the fogF to produce the final aryl aldehydes flavoglaucin and congeners. The short-chain dehydrogenase fogG does not seem to be involved in the biosynthesis of the prenylated salicylaldehyde derivatives. This is FAD-linked oxidoreductase fogF from Aspergillus ruber (strain CBS 135680).